We begin with the raw amino-acid sequence, 177 residues long: Large ribosomal subunit protein uL6 (177 aa).

Belongs to the universal ribosomal protein uL6 family. In terms of assembly, part of the 50S ribosomal subunit.

Its function is as follows. This protein binds to the 23S rRNA, and is important in its secondary structure. It is located near the subunit interface in the base of the L7/L12 stalk, and near the tRNA binding site of the peptidyltransferase center. The polypeptide is Large ribosomal subunit protein uL6 (Psychrobacter arcticus (strain DSM 17307 / VKM B-2377 / 273-4)).